Consider the following 143-residue polypeptide: Sec-independent protein translocase protein TatB (143 aa).

The helical transmembrane segment at 2-22 (FGNIGWGEFMVLLVAALVILG) threads the bilayer. The tract at residues 97 to 143 (FDKPGSVSFDKSNPGTKAVSADPSTPTAPQNKPLAAGERPPIDLDAT) is disordered.

The protein belongs to the TatB family. The Tat system comprises two distinct complexes: a TatABC complex, containing multiple copies of TatA, TatB and TatC subunits, and a separate TatA complex, containing only TatA subunits. Substrates initially bind to the TatABC complex, which probably triggers association of the separate TatA complex to form the active translocon.

The protein localises to the cell membrane. Part of the twin-arginine translocation (Tat) system that transports large folded proteins containing a characteristic twin-arginine motif in their signal peptide across membranes. Together with TatC, TatB is part of a receptor directly interacting with Tat signal peptides. TatB may form an oligomeric binding site that transiently accommodates folded Tat precursor proteins before their translocation. This Rhodococcus opacus (strain B4) protein is Sec-independent protein translocase protein TatB.